An 822-amino-acid polypeptide reads, in one-letter code: Serine/threonine-protein phosphatase 4 regulatory subunit 3 (822 aa).

The WH1 domain maps to 1 to 100; the sequence is MTDTRRRVKV…DEIWEKICQV (100 aa). The segment at 744-822 is disordered; it reads TSQLSASGHP…PLTKKARLGS (79 aa). Low complexity predominate over residues 761–774; that stretch reads SPGSPESPGSVSKS. Residues 793–808 are compositionally biased toward acidic residues; sequence YPDDDEEDDDNDEEEK.

It belongs to the SMEK family. As to quaternary structure, serine/threonine-protein phosphatase 4 (PP4) occurs in different assemblies of the catalytic and one or more regulatory subunits.

In terms of biological role, regulatory subunit of serine/threonine-protein phosphatase 4. The sequence is that of Serine/threonine-protein phosphatase 4 regulatory subunit 3 (smek1) from Xenopus laevis (African clawed frog).